The sequence spans 102 residues: Small ribosomal subunit protein uS10 (102 aa).

Belongs to the universal ribosomal protein uS10 family. In terms of assembly, part of the 30S ribosomal subunit.

Its function is as follows. Involved in the binding of tRNA to the ribosomes. This Geotalea daltonii (strain DSM 22248 / JCM 15807 / FRC-32) (Geobacter daltonii) protein is Small ribosomal subunit protein uS10.